The primary structure comprises 311 residues: Mitochondrial arginine transporter BAC1 (311 aa).

3 Solcar repeats span residues Phe-12 to Phe-101, Pro-111 to His-203, and Val-219 to Met-305. 6 helical membrane passes run Tyr-18–Val-38, Gly-76–Ser-96, Pro-113–Pro-133, Gly-178–Tyr-197, Gly-222–Phe-242, and Ala-288–Ile-308.

This sequence belongs to the mitochondrial carrier (TC 2.A.29) family. In terms of tissue distribution, high expression in flowers and siliques. Lower expression in leaves and stems.

It localises to the mitochondrion inner membrane. Its activity is regulated as follows. Inhibited by mercuric chloride. Mitochondrial arginine transporter that catalyzes the counter-exchange of arginine with lysine, ornithine, arginine and histidine. Substrate preference in reconstituted proteoliposomes is arginine &gt; lysine &gt; ornithine &gt; histidine. May be involved in the delivery of arginine, released from seed reserves, to mitochondrial arginase and the export of ornithine. This Arabidopsis thaliana (Mouse-ear cress) protein is Mitochondrial arginine transporter BAC1 (BAC1).